Consider the following 21-residue polypeptide: Hemocyanin subunit 4 (21 aa).

The protein belongs to the tyrosinase family. Hemocyanin subfamily. Hemolymph.

The protein localises to the secreted. The protein resides in the extracellular space. Functionally, hemocyanins are copper-containing oxygen carriers occurring freely dissolved in the hemolymph of many mollusks and arthropods. This is Hemocyanin subunit 4 from Maja squinado (Mediterranean spider crab).